A 392-amino-acid polypeptide reads, in one-letter code: Probable glucan endo-1,6-beta-glucosidase B (392 aa).

Positions 1 to 18 are cleaved as a signal peptide; the sequence is MKVTRLAVLNTLATLTVA. N-linked (GlcNAc...) asparagine glycosylation occurs at N31. E220 acts as the Proton donor in catalysis. E322 serves as the catalytic Nucleophile.

It belongs to the glycosyl hydrolase 5 (cellulase A) family.

It localises to the secreted. It catalyses the reaction Random hydrolysis of (1-&gt;6)-linkages in (1-&gt;6)-beta-D-glucans.. Functionally, beta-glucanases participate in the metabolism of beta-glucan, the main structural component of the cell wall. Acts on lutean, pustulan and 1,6-oligo-beta-D-glucosides. This Aspergillus flavus (strain ATCC 200026 / FGSC A1120 / IAM 13836 / NRRL 3357 / JCM 12722 / SRRC 167) protein is Probable glucan endo-1,6-beta-glucosidase B (exgB).